The chain runs to 313 residues: Probable cytochrome c oxidase subunit 2 (313 aa).

Residues R5–Y51 enclose the RPE1 insert domain. The next 3 helical transmembrane spans lie at Y39–I59, L94–I114, and L131–P151. Cu cation-binding residues include H233, C268, C272, and H276.

It belongs to the cytochrome c oxidase subunit 2 family. The cofactor is Cu cation. It depends on heme as a cofactor.

Its subcellular location is the cell membrane. The enzyme catalyses 4 Fe(II)-[cytochrome c] + O2 + 8 H(+)(in) = 4 Fe(III)-[cytochrome c] + 2 H2O + 4 H(+)(out). In terms of biological role, subunits I and II form the functional core of the enzyme complex. Electrons originating in cytochrome c are transferred via heme a and Cu(A) to the binuclear center formed by heme a3 and Cu(B). In Rickettsia prowazekii (strain Madrid E), this protein is Probable cytochrome c oxidase subunit 2 (ctaC).